Reading from the N-terminus, the 269-residue chain is Imidazoleglycerol-phosphate dehydratase 1, chloroplastic (269 aa).

2 disordered regions span residues 1–31 (MTTA…GSGG) and 54–73 (SGVG…VSSR). The N-terminal 52 residues, 1–52 (MTTAPFVSPSLPRLHSARASPFPKPSVGSGGGVAFPARTYGSSLRLRSAVMS), are a transit peptide targeting the chloroplast. Substrate contacts are provided by residues glutamate 83, 109-117 (HMLDQLASH), 135-139 (HHSNE), arginine 161, and arginine 183. 4 residues coordinate Mn(2+): histidine 109, histidine 135, histidine 136, and glutamate 139. The Mn(2+) site is built by histidine 207, histidine 231, histidine 232, and glutamate 235. Substrate is bound by residues 231-239 (HHIIEATFK) and 261-263 (SSK).

It belongs to the imidazoleglycerol-phosphate dehydratase family. Mn(2+) is required as a cofactor.

The protein localises to the plastid. It localises to the chloroplast. The catalysed reaction is D-erythro-1-(imidazol-4-yl)glycerol 3-phosphate = 3-(imidazol-4-yl)-2-oxopropyl phosphate + H2O. It functions in the pathway amino-acid biosynthesis; L-histidine biosynthesis; L-histidine from 5-phospho-alpha-D-ribose 1-diphosphate: step 6/9. In Triticum aestivum (Wheat), this protein is Imidazoleglycerol-phosphate dehydratase 1, chloroplastic.